Consider the following 215-residue polypeptide: ATP-dependent Clp protease proteolytic subunit (215 aa).

Residue Ser-111 is the Nucleophile of the active site. Residue His-136 is part of the active site.

It belongs to the peptidase S14 family. Fourteen ClpP subunits assemble into 2 heptameric rings which stack back to back to give a disk-like structure with a central cavity, resembling the structure of eukaryotic proteasomes.

The protein resides in the cytoplasm. The enzyme catalyses Hydrolysis of proteins to small peptides in the presence of ATP and magnesium. alpha-casein is the usual test substrate. In the absence of ATP, only oligopeptides shorter than five residues are hydrolyzed (such as succinyl-Leu-Tyr-|-NHMec, and Leu-Tyr-Leu-|-Tyr-Trp, in which cleavage of the -Tyr-|-Leu- and -Tyr-|-Trp bonds also occurs).. Its function is as follows. Cleaves peptides in various proteins in a process that requires ATP hydrolysis. Has a chymotrypsin-like activity. Plays a major role in the degradation of misfolded proteins. The polypeptide is ATP-dependent Clp protease proteolytic subunit (Hamiltonella defensa subsp. Acyrthosiphon pisum (strain 5AT)).